A 136-amino-acid chain; its full sequence is DNA-directed RNA polymerase subunit omega (136 aa).

Residues 81-136 (EAEAVPLLSSSPAAAAVAPQSSGDDGDIQFDRMSEEDLLRGLENLAPPTETEDEGD) form a disordered region. Residues 83–99 (EAVPLLSSSPAAAAVAP) show a composition bias toward low complexity. The segment covering 109-120 (QFDRMSEEDLLR) has biased composition (basic and acidic residues).

This sequence belongs to the RNA polymerase subunit omega family. In terms of assembly, the RNAP catalytic core consists of 2 alpha, 1 beta, 1 beta' and 1 omega subunit. When a sigma factor is associated with the core the holoenzyme is formed, which can initiate transcription.

It carries out the reaction RNA(n) + a ribonucleoside 5'-triphosphate = RNA(n+1) + diphosphate. Promotes RNA polymerase assembly. Latches the N- and C-terminal regions of the beta' subunit thereby facilitating its interaction with the beta and alpha subunits. This is DNA-directed RNA polymerase subunit omega from Methylobacterium nodulans (strain LMG 21967 / CNCM I-2342 / ORS 2060).